We begin with the raw amino-acid sequence, 135 residues long: RuBisCO chaperone RbcX (135 aa).

The segment at 103 to 135 is disordered; that stretch reads QHLERMTQVSLSHPSPESEQQQFSDPDWDNLAS. Over residues 109–126 the composition is skewed to polar residues; sequence TQVSLSHPSPESEQQQFS.

Belongs to the RbcX family. Homodimer. Interacts with the exposed C-terminal peptide of RbcL ('Glu-459-Asp-468'); binds 1 RbcL peptide per homodimer. Contacts a second RbcL monomer via its peripheral polar surface. A slightly longer RbcL peptide binds to RbcX2 with a higher affinity.

It localises to the carboxysome. Its subcellular location is the cytoplasm. Functionally, an RbcL-specific chaperone. The central cleft of the RbcX homodimer (RbcX2) binds the C-terminus of an RbcL monomer, stabilizing the C-terminus and probably preventing its reassociation with chaperonin GroEL-ES. At the same time the peripheral region of RbcX2 binds a second RbcL monomer, bridging the RbcL homodimers in the correct orientation. The RbcX2(2)-bound RbcL dimers then assemble into the RbcL8 core (RbcL8-(RbcX2)8). RbcS binding triggers the release of RbcX2. In terms of biological role, required for optimal reconstitution of RuBisCO upon expression of rbcL-rbcS subunits in E.coli. This Anabaena sp. (strain CA / ATCC 33047) protein is RuBisCO chaperone RbcX.